A 73-amino-acid polypeptide reads, in one-letter code: Gastricsin (73 aa).

Positions 1-43 (SVIKVPLKKLKSIRQAMKEKGLLEEFLKTHKYDPAQRYRIGDI) are cleaved as a propeptide — activation peptide. The Peptidase A1 domain occupies 57–73 (YFGEISIGTPPQNFLVL).

This sequence belongs to the peptidase A1 family.

Its subcellular location is the secreted. It catalyses the reaction More restricted specificity than pepsin A, but shows preferential cleavage at Tyr-|-Xaa bonds. High activity on hemoglobin.. Hydrolyzes a variety of proteins. This is Gastricsin (PGC) from Sus scrofa (Pig).